The chain runs to 83 residues: Cobrotoxin homolog (83 aa).

The signal sequence occupies residues 1–21; sequence METLLLTLLVVTIVCLDLGYT. Cystine bridges form between Cys-24/Cys-45, Cys-38/Cys-62, Cys-64/Cys-75, and Cys-76/Cys-81.

This sequence belongs to the three-finger toxin family. Short-chain subfamily. Type I alpha-neurotoxin sub-subfamily. As to expression, expressed by the venom gland.

It localises to the secreted. In terms of biological role, binds to muscle nicotinic acetylcholine receptor (nAChR) and inhibit acetylcholine from binding to the receptor, thereby impairing neuromuscular transmission. This chain is Cobrotoxin homolog, found in Naja naja (Indian cobra).